The following is a 214-amino-acid chain: Quinolone resistance pentapeptide repeat protein QnrB96 (214 aa).

Pentapeptide repeat domains follow at residues 23–103 (STFH…SFMN) and 116–189 (ITNT…VRGV).

It belongs to the pentapeptide repeat protein family.

Functionally, confers reduced sensitivity to the fluoroquinolone antibiotic ciprofloxacin (five-fold increase in minimum inhibitory concentration) when expressed in E.coli. This is Quinolone resistance pentapeptide repeat protein QnrB96 from Scandinavium goeteborgense.